Consider the following 379-residue polypeptide: UDP-4-amino-4-deoxy-L-arabinose--oxoglutarate aminotransferase (379 aa).

N6-(pyridoxal phosphate)lysine is present on Lys-182.

The protein belongs to the DegT/DnrJ/EryC1 family. ArnB subfamily. As to quaternary structure, homodimer. It depends on pyridoxal 5'-phosphate as a cofactor.

It carries out the reaction UDP-4-amino-4-deoxy-beta-L-arabinose + 2-oxoglutarate = UDP-beta-L-threo-pentopyranos-4-ulose + L-glutamate. It participates in nucleotide-sugar biosynthesis; UDP-4-deoxy-4-formamido-beta-L-arabinose biosynthesis; UDP-4-deoxy-4-formamido-beta-L-arabinose from UDP-alpha-D-glucuronate: step 2/3. The protein operates within bacterial outer membrane biogenesis; lipopolysaccharide biosynthesis. Catalyzes the conversion of UDP-4-keto-arabinose (UDP-Ara4O) to UDP-4-amino-4-deoxy-L-arabinose (UDP-L-Ara4N). The modified arabinose is attached to lipid A and is required for resistance to polymyxin and cationic antimicrobial peptides. The chain is UDP-4-amino-4-deoxy-L-arabinose--oxoglutarate aminotransferase from Shigella flexneri.